The chain runs to 719 residues: DNA replication licensing factor MCM7 (719 aa).

Residue alanine 2 is modified to N-acetylalanine. Glycyl lysine isopeptide (Lys-Gly) (interchain with G-Cter in SUMO2) cross-links involve residues lysine 15 and lysine 28. Serine 314 is modified (phosphoserine). Residues 332–538 (FYEKLAASIA…NDLRLAQHIT (207 aa)) enclose the MCM domain. Tyrosine 345 contributes to the ATP binding site. Serine 365 is subject to Phosphoserine. Residues glycine 384, alanine 386, lysine 387, serine 388, and asparagine 489 each coordinate ATP. A Phosphoserine modification is found at serine 500. An Arginine finger motif is present at residues 513 to 516 (SRFD). Position 514 (arginine 514) interacts with ATP. The interaction with RAD17 stretch occupies residues 521–564 (IQDRPDRDNDLRLAQHITYVHQHSRQPPAQFEPLDMKLMRRYIA). An interaction with ATRIP region spans residues 577–719 (LADYITAAYV…NTSRTRITFV (143 aa)). Arginine 604 provides a ligand contact to ATP. Position 678 is a phosphoserine (serine 678).

This sequence belongs to the MCM family. In terms of assembly, component of the MCM2-7 complex. The complex forms a toroidal hexameric ring with the proposed subunit order MCM2-MCM6-MCM4-MCM7-MCM3-MCM5. Component of the CMG helicase complex, a hexameric ring of related MCM2-7 subunits stabilized by CDC45 and the tetrameric GINS complex. Interacts with the ATR-ATRIP complex and with RAD17. Interacts with TIPIN. Interacts with MCMBP. Interacts with ANKRD17. Component of the replisome complex composed of at least DONSON, MCM2, MCM7, PCNA and TICRR. In terms of processing, O-glycosylated (O-GlcNAcylated), in a cell cycle-dependent manner. Ubiquitinated by ECS(LRR1) E3 ubiquitin-protein ligase complex when forks converge following formation of DNA interstrand cross-links. During mitosis, ubiquitinated by TRAIP when forks converge following formation of DNA interstrand cross-links. Short ubiquitin chains on MCM7 promote recruitment of DNA glycosylase NEIL3. If the interstrand cross-link cannot be cleaved by NEIL3, the ubiquitin chains continue to grow on MCM7, promoting the unloading of the CMG helicase complex by the VCP/p97 ATPase.

The protein resides in the nucleus. It localises to the chromosome. It carries out the reaction ATP + H2O = ADP + phosphate + H(+). Its function is as follows. Acts as a component of the MCM2-7 complex (MCM complex) which is the replicative helicase essential for 'once per cell cycle' DNA replication initiation and elongation in eukaryotic cells. Core component of CDC45-MCM-GINS (CMG) helicase, the molecular machine that unwinds template DNA during replication, and around which the replisome is built. The active ATPase sites in the MCM2-7 ring are formed through the interaction surfaces of two neighboring subunits such that a critical structure of a conserved arginine finger motif is provided in trans relative to the ATP-binding site of the Walker A box of the adjacent subunit. The six ATPase active sites, however, are likely to contribute differentially to the complex helicase activity. Uncomplexed form does not show ATPase or DNA helicase. Required for S-phase checkpoint activation upon UV-induced damage. The protein is DNA replication licensing factor MCM7 (Mcm7) of Mus musculus (Mouse).